The following is a 372-amino-acid chain: MHPDVSADLAELDATLKTVESVLDIEELRRRIDELEHQAADPDLWNDQDHAQRVTSELSHAQGELRRVEDLRRRLEDLPVLYELAEGEEGEARTAALEEADAERAALHSDVEAMEVRTLLSGEYDKREALVNIRSGAGGVDAADWAEMLMRMYIRWADRHGYPVEVYDTSYAEEAGIKSATFAVKTPYAYGTLSVEMGTHRLVRISPFDNQGRRQTSFAEVEVLPVVETTDHIEVPETEIRVDVYRSSGPGGQSVNTTDSAVRITHIPTGIVVTCQNEKSQLQNKISAMRVLQAKLLERKRQEERAEMDALKTNEGASWGNQMRSYVLHPYQMVKDLRTNYEVNNPSAVLNGDIDGFIESGIRWRMRESQAS.

N5-methylglutamine is present on Q253.

It belongs to the prokaryotic/mitochondrial release factor family. In terms of processing, methylated by PrmC. Methylation increases the termination efficiency of RF2.

The protein resides in the cytoplasm. Peptide chain release factor 2 directs the termination of translation in response to the peptide chain termination codons UGA and UAA. The chain is Peptide chain release factor 2 from Nocardia farcinica (strain IFM 10152).